The sequence spans 309 residues: Serine/threonine-protein phosphatase 2A catalytic subunit beta isoform (309 aa).

Asp57, His59, Asp85, and Asn117 together coordinate Mn(2+). Residue His118 is the Proton donor of the active site. Positions 167 and 241 each coordinate Mn(2+). Position 307 is a phosphotyrosine (Tyr307). A Leucine methyl ester modification is found at Leu309.

It belongs to the PPP phosphatase family. PP-1 subfamily. In terms of assembly, found in a complex with at least ARL2, PPP2CB, PPP2R1A, PPP2R2A, PPP2R5E and TBCD. Interacts with TBCD. PP2A consists of a common heterodimeric core enzyme (composed of a 36 kDa catalytic subunit (subunit C) and a 65 kDa constant regulatory subunit (PR65) (subunit A)) that associates with a variety of regulatory subunits. Proteins that associate with the core dimer include three families of regulatory subunits B (the R2/B/PR55/B55, R3/B''/PR72/PR130/PR59 and R5/B'/B56 families), the 48 kDa variable regulatory subunit, viral proteins, and cell signaling molecules. Binds PPME1. May indirectly interact with SGO1, most probably through regulatory B56 subunits. Interacts with CTTNBP2NL. Interacts with PTPA. Part of the core of STRIPAK complexes composed of PP2A catalytic and scaffolding subunits, the striatins (PP2A regulatory subunits), the striatin-associated proteins MOB4, STRIP1 and STRIP2, PDCD10 and members of the STE20 kinases, such as STK24 and STK26. Requires Mn(2+) as cofactor. Reversibly methyl esterified on Leu-309 by leucine carboxyl methyltransferase 1 (Lcmt1) and protein phosphatase methylesterase 1 (PPME1). Carboxyl methylation influences the affinity of the catalytic subunit for the different regulatory subunits, thereby modulating the PP2A holoenzyme's substrate specificity, enzyme activity and cellular localization. Post-translationally, phosphorylation of either threonine (by autophosphorylation-activated protein kinase) or tyrosine results in inactivation of the phosphatase. Auto-dephosphorylation has been suggested as a mechanism for reactivation. In terms of processing, may be monoubiquitinated by NOSIP.

The protein resides in the cytoplasm. The protein localises to the nucleus. Its subcellular location is the chromosome. It localises to the centromere. It is found in the cytoskeleton. The protein resides in the spindle pole. It catalyses the reaction O-phospho-L-seryl-[protein] + H2O = L-seryl-[protein] + phosphate. The enzyme catalyses O-phospho-L-threonyl-[protein] + H2O = L-threonyl-[protein] + phosphate. Its function is as follows. Catalytic subunit of protein phosphatase 2A (PP2A), a serine/threonine phosphatase involved in the regulation of a wide variety of enzymes, signal transduction pathways, and cellular events. PP2A can modulate the activity of phosphorylase B kinase, casein kinase 2, mitogen-stimulated S6 kinase, and MAP-2 kinase. Part of the striatin-interacting phosphatase and kinase (STRIPAK) complexes. STRIPAK complexes have critical roles in protein (de)phosphorylation and are regulators of multiple signaling pathways including Hippo, MAPK, nuclear receptor and cytoskeleton remodeling. Different types of STRIPAK complexes are involved in a variety of biological processes such as cell growth, differentiation, apoptosis, metabolism and immune regulation. The chain is Serine/threonine-protein phosphatase 2A catalytic subunit beta isoform (PPP2CB) from Oryctolagus cuniculus (Rabbit).